An 82-amino-acid polypeptide reads, in one-letter code: Ranatensin (82 aa).

A signal peptide spans 1 to 27 (MTTIPAIGILPIDFLTILLLFSFISHS). The propeptide occupies 28-47 (VCVEFAEDAGELDKSNAFRR). Met58 carries the methionine amide modification. Residues 62–82 (SLSDDTEQATMYSSRFVESTS) constitute a propeptide that is removed on maturation.

This sequence belongs to the bombesin/neuromedin-B/ranatensin family. As to expression, expressed by the skin glands.

The protein localises to the secreted. In Lithobates pipiens (Northern leopard frog), this protein is Ranatensin.